A 305-amino-acid polypeptide reads, in one-letter code: tRNA pseudouridine synthase B (305 aa).

The active-site Nucleophile is Asp38.

This sequence belongs to the pseudouridine synthase TruB family. Type 1 subfamily.

The enzyme catalyses uridine(55) in tRNA = pseudouridine(55) in tRNA. Functionally, responsible for synthesis of pseudouridine from uracil-55 in the psi GC loop of transfer RNAs. The protein is tRNA pseudouridine synthase B of Latilactobacillus sakei subsp. sakei (strain 23K) (Lactobacillus sakei subsp. sakei).